A 1382-amino-acid chain; its full sequence is MWKTLGRVEQLLPYASLILRNREVLFREPKRGIDEYLENDSFFQMIPVKYREIVLPKLRRDTNKMTAALKNKVAVAIDELTVPLMWMIHFAVGYPYRYPELQLLAFAGPQRNVYVDDTTRRIQLYTDYNKNGSSEPRLKTLDGLTSDYVFYFVTVLRQMQICALGNSYDAFNHDPWMDVVGFEDPDQVTNRDISRIVLYSYMFLNTAKGCLVEYATFRQYMRELPKNAPQKLNFREMRQGLIALGRHCVGSRFETDLYESATSELMANHSVQTGRNIYGVDSFSLTSVSGTTATLLQERASERWIQWLGLESDYHCSFSSTRNAEDVVAGEAASSDHHQKISRVTRKRPREPKSTNDILVAGRKLFGSSFEFRDLHQLRLCHEIYMADTPSVAVQAPPGYGKTELFHLPLIALASKGDVKYVSFLFVPYTVLLANCMIRLSRCGCLNVAPVRNFIEEGCDGVTDLYVGIYDDLASTNFTDRIAAWENIVECTFRTNNVKLGYLIVDEFHNFETEVYRQSQFGGITNLDFDAFEKAIFLSGTAPEAVADAALQRIGLTGLAKKSMDINELKRSEDLSRGLSSYPTRMFNLIKEKSEVPLGHVHKIWKKVESQPEEALKLLLALFEIEPESKAIVVASTTNEVEELACSWRKYFRVVWIHGKLGAAEKVSRTKEFVTDGSMRVLIGTKLVTEGIDIKQLMMVIMLDNRLNIIELIQGVGRLRDGGLCYLLSRKNSWAARNRKGELPPIKEGCITEQVREFYGLESKKGKKGQHVGCCGSRTDLSADTVELIERMDRLAEKQATASMSIIALPSSFQESNSSDRCRKYCSSDEDSDTCIHGSANASTNATTNSSTNATTTASTNVRTSATTTASINVRTSAITTESTNSSTNATTTASTNVRTSATTTASINVRTSATTTESTNSNTSATTTESTDSNTSATTTESTDSNTSATTTASTNSSTNATTTASTNSSTNATTTESTNASAKEDANKDGNAEDNRFHPVTDINKESYKRKGSQMVLLERKKLKAQFPNTSENMNVLQFLGFRSDEIKHLFLYGIDVYFCPEGVFTQYGLCKGCQKMFELCVCWAGQKVSYRRMAWEALAVERMLRNDEEYKEYLEDIEPYHGDPVGYLKYFSVKRGEIYSQIQRNYAWYLAITRRRETISVLDSTRGKQGSQVFRMSGRQIKELYYKVWSNLRESKTEVLQYFLNWDEKKCREEWEAKDDTVFVEALEKVGVFQRLRSMTSAGLQGPQYVKLQFSRHHRQLRSRYELSLGMHLRDQLALGVTPSKVPHWTAFLSMLIGLFYNKTFRQKLEYLLEQISEVWLLPHWLDLANVEVLAADNTRVPLYMLMVAVHKELDSDDVPDGRFDIILLCRDSSREVGE.

The Helicase ATP-binding domain occupies 383–560; the sequence is EIYMADTPSV…LQRIGLTGLA (178 aa). Residue 396–403 participates in ATP binding; sequence APPGYGKT. Residues 617–766 enclose the Helicase C-terminal domain; the sequence is KLLLALFEIE…EFYGLESKKG (150 aa). Disordered regions lie at residues 840–864 and 880–1007; these read ANAS…NVRT and TTES…DINK. A compositionally biased stretch (low complexity) spans 880–983; that stretch reads TTESTNSSTN…ATTTESTNAS (104 aa). Over residues 984–1007 the composition is skewed to basic and acidic residues; it reads AKEDANKDGNAEDNRFHPVTDINK.

The protein belongs to the helicase family. Yeast subtelomeric Y' repeat subfamily.

Catalyzes DNA unwinding and is involved in telomerase-independent telomere maintenance. The sequence is that of Y' element ATP-dependent helicase protein 1 copy 4 (YRF1-4) from Saccharomyces cerevisiae (strain ATCC 204508 / S288c) (Baker's yeast).